Reading from the N-terminus, the 1617-residue chain is Mitogen-activated protein kinase kinae kinase bck1 (1617 aa).

Disordered stretches follow at residues 1–73, 167–199, 211–253, 345–399, 455–555, 568–633, 739–820, 832–1144, and 1165–1277; these read MDGQ…SQLQ, GPVHHLYESSGGDGSAYKRDGTVPPTPSARTMP, SVAS…GGMS, RQIH…SPNL, DHRR…SSSY, KRSK…LRGK, GVPL…ISPE, EHKR…RGDI, and IDLD…EILR. Positions 19-28 are enriched in low complexity; it reads TQPSQSHMLS. The span at 44–60 shows a compositional bias: pro residues; it reads VMPPPPPGPPPGPPPGP. Residues 220 to 248 show a composition bias toward polar residues; that stretch reads TAQNHQSQTGQTNEPTKSPSHRQNNSNTL. The span at 482 to 504 shows a compositional bias: polar residues; that stretch reads KSGSPATQHATLNQGLSSSSTGD. Basic and acidic residues predominate over residues 524–533; that stretch reads RYYESRKGQE. Polar residues-rich tracts occupy residues 535–555 and 586–596; these read IRPSPQEMCSRQWTGETSSSY and ESPTSPVNLRQ. 2 stretches are compositionally biased toward basic and acidic residues: residues 832–841 and 871–885; these read EHKREVERKQ and FDERRVSPYEDKKAD. Polar residues-rich tracts occupy residues 897-907 and 956-980; these read PQESYTLTRIN and GGKQTNFGSFGSPTQGNTKSAPQSS. Basic and acidic residues-rich tracts occupy residues 1128-1140 and 1189-1198; these read EDERPTPRRDSFA and PENDLHKKEN. Polar residues-rich tracts occupy residues 1199-1208 and 1257-1272; these read QPSSSYTGEM and NQASRSRSIHTGNQKS. The 274-residue stretch at 1323 to 1596 folds into the Protein kinase domain; sequence IIRGQLIGKG…QTLLTRHPFC (274 aa). ATP-binding positions include 1329 to 1337 and Lys-1352; that span reads IGKGTYGRV.

It belongs to the protein kinase superfamily. STE Ser/Thr protein kinase family. MAP kinase kinase kinase subfamily.

It catalyses the reaction L-seryl-[protein] + ATP = O-phospho-L-seryl-[protein] + ADP + H(+). The enzyme catalyses L-threonyl-[protein] + ATP = O-phospho-L-threonyl-[protein] + ADP + H(+). Functionally, mitogen-activated protein kinase kinase kinase; part of cell wall integrity (CWI) signaling pathway composed of pkcA, the bck1-mkk2-mpka MAPK cascade and the downstream rlmA transcription regulator. The CWI signaling pathway regulates cell wall integrity and pyomelanin formation. CWI also controls oxidative stress response, gliotoxin production, iron adaptation and asexual development. Finally, CWI is constitutively required for A.fumigatus to cope with the temperature increase found in the mammalian lung environment, during infection. In Aspergillus fumigatus (strain ATCC MYA-4609 / CBS 101355 / FGSC A1100 / Af293) (Neosartorya fumigata), this protein is Mitogen-activated protein kinase kinae kinase bck1.